A 61-amino-acid chain; its full sequence is Small ribosomal subunit protein uS14 (61 aa).

4 residues coordinate Zn(2+): Cys24, Cys27, Cys40, and Cys43.

This sequence belongs to the universal ribosomal protein uS14 family. Zinc-binding uS14 subfamily. In terms of assembly, part of the 30S ribosomal subunit. Contacts proteins S3 and S10. Zn(2+) serves as cofactor.

Binds 16S rRNA, required for the assembly of 30S particles and may also be responsible for determining the conformation of the 16S rRNA at the A site. This Mycobacterium avium (strain 104) protein is Small ribosomal subunit protein uS14.